The sequence spans 473 residues: Photosystem II CP43 reaction center protein (473 aa).

Residues 1-14 constitute a propeptide that is removed on maturation; sequence MKILYSLRRYFHVE. An N-acetylthreonine modification is found at Thr15. Thr15 carries the post-translational modification Phosphothreonine. 5 helical membrane passes run 69–93, 134–155, 178–200, 255–275, and 291–312; these read LFEV…PHLA, LIGP…KDKN, KAIW…RKIT, KPFA…LSYS, and WFNN…ASQA. Glu367 contributes to the [CaMn4O5] cluster binding site. A helical transmembrane segment spans residues 447 to 471; that stretch reads RARAAAAGFEKGIDRDSEPVLYMEP.

This sequence belongs to the PsbB/PsbC family. PsbC subfamily. PSII is composed of 1 copy each of membrane proteins PsbA, PsbB, PsbC, PsbD, PsbE, PsbF, PsbH, PsbI, PsbJ, PsbK, PsbL, PsbM, PsbT, PsbX, PsbY, PsbZ, Psb30/Ycf12, at least 3 peripheral proteins of the oxygen-evolving complex and a large number of cofactors. It forms dimeric complexes. Binds multiple chlorophylls and provides some of the ligands for the Ca-4Mn-5O cluster of the oxygen-evolving complex. It may also provide a ligand for a Cl- that is required for oxygen evolution. PSII binds additional chlorophylls, carotenoids and specific lipids. is required as a cofactor.

It is found in the plastid. It localises to the chloroplast thylakoid membrane. Functionally, one of the components of the core complex of photosystem II (PSII). It binds chlorophyll and helps catalyze the primary light-induced photochemical processes of PSII. PSII is a light-driven water:plastoquinone oxidoreductase, using light energy to abstract electrons from H(2)O, generating O(2) and a proton gradient subsequently used for ATP formation. This chain is Photosystem II CP43 reaction center protein, found in Chara vulgaris (Common stonewort).